The primary structure comprises 1203 residues: DNA-directed RNA polymerase subunit beta (1203 aa).

A disordered region spans residues 1167 to 1203; it reads LSKYAQQQEEQRKAAAQTDESKTAPATKNESQPNTQD. Polar residues predominate over residues 1190-1203; the sequence is APATKNESQPNTQD.

It belongs to the RNA polymerase beta chain family. In terms of assembly, the RNAP catalytic core consists of 2 alpha, 1 beta, 1 beta' and 1 omega subunit. When a sigma factor is associated with the core the holoenzyme is formed, which can initiate transcription.

It carries out the reaction RNA(n) + a ribonucleoside 5'-triphosphate = RNA(n+1) + diphosphate. DNA-dependent RNA polymerase catalyzes the transcription of DNA into RNA using the four ribonucleoside triphosphates as substrates. The polypeptide is DNA-directed RNA polymerase subunit beta (Levilactobacillus brevis (strain ATCC 367 / BCRC 12310 / CIP 105137 / JCM 1170 / LMG 11437 / NCIMB 947 / NCTC 947) (Lactobacillus brevis)).